The sequence spans 30 residues: Cyclotide hyen-C (30 aa).

The cyclopeptide (Gly-Asn) cross-link spans 1 to 30 (GTHPCQETCVTSTRCSTQGCHCNWPICFKN). 3 disulfide bridges follow: Cys-5-Cys-20, Cys-9-Cys-22, and Cys-15-Cys-27.

Post-translationally, this is a cyclic peptide. In terms of tissue distribution, detected in stems (at protein level).

Functionally, probably participates in a plant defense mechanism. Does not display any cytotoxic activity towards K562, HeLa, MCF-7, HUVEC or red blood cells. Does not bind to phospholipd membranes containing 1-palmitoyl 2-oleoyl phosphatidylcholine (POPC) or 1-palmitoyl-2-oleophosphatidylethanolamine (POPE). This is Cyclotide hyen-C from Pigea enneasperma (Spade flower).